A 76-amino-acid chain; its full sequence is MFTLKKSLLLLFFLGTISLSLCQEERNADEEDGGEVTEEEVKRSFLDTLKNLAISAAKGAGQSVLSTLSCKLSKTC.

Positions Met1–Cys22 are cleaved as a signal peptide. Residues Gln23–Val41 constitute a propeptide that is removed on maturation. Cys70 and Cys76 form a disulfide bridge.

In terms of tissue distribution, expressed by the skin glands.

It localises to the secreted. In terms of biological role, antimicrobial peptide. This Odorrana livida (Green mountain frog) protein is Lividin-2.